The chain runs to 230 residues: MTILTARPEAITFDPQQSALIVVDMQNAYATPGGYLDLAGFDVSTTRPVIANIQTAVTAARAAGMLIIWFQNGWDEQYVEAGGPGSPNFHKSNALKTMRKQPQLQGKLLAKGSWDYQLVDELVPQPGDIVLPKPRYSGFFNTPLDSILRSRGIRHLVFTGIATNVCVESTLRDGFFLEYFGVVLEDATHQAGPEFAQKAALFNIETFFGWVSDVETFCDALSPTSFARIA.

The active-site Proton acceptor is Asp-24. The active site involves Lys-133. Cys-166 (nucleophile) is an active-site residue.

The protein belongs to the isochorismatase family. RutB subfamily.

It catalyses the reaction (Z)-3-ureidoacrylate + H2O + H(+) = (Z)-3-aminoacrylate + NH4(+) + CO2. The catalysed reaction is (Z)-3-ureidoacrylate + H2O = (Z)-3-aminoacrylate + carbamate + H(+). The enzyme catalyses (Z)-2-methylureidoacrylate + H2O + H(+) = (Z)-2-methylaminoacrylate + NH4(+) + CO2. Hydrolyzes ureidoacrylate to form aminoacrylate and carbamate. The carbamate hydrolyzes spontaneously, thereby releasing one of the nitrogen atoms of the pyrimidine ring as ammonia and one of its carbon atoms as CO2. This chain is Ureidoacrylate amidohydrolase RutB, found in Escherichia coli O44:H18 (strain 042 / EAEC).